Here is a 70-residue protein sequence, read N- to C-terminus: Small ribosomal subunit protein bS21 (70 aa).

This sequence belongs to the bacterial ribosomal protein bS21 family.

This is Small ribosomal subunit protein bS21 from Nitratidesulfovibrio vulgaris (strain ATCC 29579 / DSM 644 / CCUG 34227 / NCIMB 8303 / VKM B-1760 / Hildenborough) (Desulfovibrio vulgaris).